Here is a 229-residue protein sequence, read N- to C-terminus: DNA mismatch repair protein MutH (229 aa).

The protein belongs to the MutH family.

It is found in the cytoplasm. Sequence-specific endonuclease that cleaves unmethylated GATC sequences. It is involved in DNA mismatch repair. In Shigella flexneri, this protein is DNA mismatch repair protein MutH.